Consider the following 272-residue polypeptide: Phosphoglycolate phosphatase (272 aa).

Asp19 serves as the catalytic Nucleophile. Asp19, Asp21, and Asp182 together coordinate Mg(2+).

It belongs to the HAD-like hydrolase superfamily. CbbY/CbbZ/Gph/YieH family. It depends on Mg(2+) as a cofactor.

The catalysed reaction is 2-phosphoglycolate + H2O = glycolate + phosphate. It functions in the pathway organic acid metabolism; glycolate biosynthesis; glycolate from 2-phosphoglycolate: step 1/1. Specifically catalyzes the dephosphorylation of 2-phosphoglycolate. Is involved in the dissimilation of the intracellular 2-phosphoglycolate formed during the DNA repair of 3'-phosphoglycolate ends, a major class of DNA lesions induced by oxidative stress. The polypeptide is Phosphoglycolate phosphatase (Pseudomonas savastanoi pv. phaseolicola (strain 1448A / Race 6) (Pseudomonas syringae pv. phaseolicola (strain 1448A / Race 6))).